Here is a 309-residue protein sequence, read N- to C-terminus: Mycothiol acetyltransferase (309 aa).

2 consecutive N-acetyltransferase domains span residues Glu16–Pro158 and Val166–Thr309. Glu47 serves as a coordination point for 1D-myo-inositol 2-(L-cysteinylamino)-2-deoxy-alpha-D-glucopyranoside. Leu92 to Val94 contributes to the acetyl-CoA binding site. Residues Glu193, Lys232, and Glu241 each coordinate 1D-myo-inositol 2-(L-cysteinylamino)-2-deoxy-alpha-D-glucopyranoside. Acetyl-CoA contacts are provided by residues Leu245–Ile247 and Gln252–Lys258. A 1D-myo-inositol 2-(L-cysteinylamino)-2-deoxy-alpha-D-glucopyranoside-binding site is contributed by Tyr279.

This sequence belongs to the acetyltransferase family. MshD subfamily. As to quaternary structure, monomer.

It catalyses the reaction 1D-myo-inositol 2-(L-cysteinylamino)-2-deoxy-alpha-D-glucopyranoside + acetyl-CoA = mycothiol + CoA + H(+). Catalyzes the transfer of acetyl from acetyl-CoA to desacetylmycothiol (Cys-GlcN-Ins) to form mycothiol. The sequence is that of Mycothiol acetyltransferase from Streptomyces coelicolor (strain ATCC BAA-471 / A3(2) / M145).